Here is a 544-residue protein sequence, read N- to C-terminus: Epidermal growth factor-like protein 6 (544 aa).

The N-terminal stretch at 1–30 (MAITGGMQSSDMVLLLWITVICACCSFVDS) is a signal peptide. The EGF-like 1 domain maps to 63 to 98 (RKGQCEAVCEQGCKHGECVGPNKCKCFPGFTGKNCN). 6 cysteine pairs are disulfide-bonded: C67–C80, C71–C86, C88–C97, C104–C115, C111–C124, and C126–C138. The EGF-like 2; calcium-binding domain maps to 100 to 139 (DLNECGLKPRPCEHRCMNTHGSYKCYCLNGYMLMPDGSCS). In terms of domain architecture, EGF-like 3 spans 144-178 (CAMANCQYGCEQVKGDIRCLCPSGGLQLGPDGRTC). An EGF-like 4; calcium-binding domain is found at 180-218 (DIDECAVGKASCPINRRCVNTFGSYYCKCQIGYELKYVN). 5 disulfides stabilise this stretch: C184-C197, C191-C206, C229-C242, C236-C251, and C253-C264. In terms of domain architecture, EGF-like 5; calcium-binding spans 225–265 (DINECLLNTHKCSINADCLNTQGSFKCRCKHGFKGNGQECS). The interval 332-357 (GNDNDEEEGEIEEEEEEELDEEDEEN) is disordered. The stretch at 333–367 (NDNDEEEGEIEEEEEEELDEEDEENVIEEEKLLRG) forms a coiled coil. Acidic residues predominate over residues 334 to 357 (DNDEEEGEIEEEEEEELDEEDEEN). The region spanning 399 to 543 (VDCRFDQGTC…VFLSSGPCSD (145 aa)) is the MAM domain.

It belongs to the nephronectin family.

The protein resides in the secreted. It localises to the extracellular space. The protein localises to the extracellular matrix. It is found in the basement membrane. May play a role in organ morphogenesis. Promotes matrix assembly. The polypeptide is Epidermal growth factor-like protein 6 (egfl6) (Xenopus laevis (African clawed frog)).